Consider the following 561-residue polypeptide: Probable oligo-1,6-glucosidase 2 (561 aa).

Aspartate 199 acts as the Nucleophile in catalysis. The active-site Proton donor is the glutamate 255.

Belongs to the glycosyl hydrolase 13 family.

It is found in the cytoplasm. It carries out the reaction Hydrolysis of (1-&gt;6)-alpha-D-glucosidic linkages in some oligosaccharides produced from starch and glycogen by alpha-amylase, and in isomaltose.. The sequence is that of Probable oligo-1,6-glucosidase 2 (ycdG) from Bacillus subtilis (strain 168).